The chain runs to 260 residues: UPF0246 protein BTH_I1090 (260 aa).

The protein belongs to the UPF0246 family.

The polypeptide is UPF0246 protein BTH_I1090 (Burkholderia thailandensis (strain ATCC 700388 / DSM 13276 / CCUG 48851 / CIP 106301 / E264)).